We begin with the raw amino-acid sequence, 432 residues long: Methylenetetrahydrofolate--tRNA-(uracil-5-)-methyltransferase TrmFO (432 aa).

7-12 (GGGLAG) is an FAD binding site.

Belongs to the MnmG family. TrmFO subfamily. FAD is required as a cofactor.

It is found in the cytoplasm. It carries out the reaction uridine(54) in tRNA + (6R)-5,10-methylene-5,6,7,8-tetrahydrofolate + NADH + H(+) = 5-methyluridine(54) in tRNA + (6S)-5,6,7,8-tetrahydrofolate + NAD(+). It catalyses the reaction uridine(54) in tRNA + (6R)-5,10-methylene-5,6,7,8-tetrahydrofolate + NADPH + H(+) = 5-methyluridine(54) in tRNA + (6S)-5,6,7,8-tetrahydrofolate + NADP(+). Functionally, catalyzes the folate-dependent formation of 5-methyl-uridine at position 54 (M-5-U54) in all tRNAs. The polypeptide is Methylenetetrahydrofolate--tRNA-(uracil-5-)-methyltransferase TrmFO (Coprothermobacter proteolyticus (strain ATCC 35245 / DSM 5265 / OCM 4 / BT)).